The chain runs to 431 residues: Adenylosuccinate synthetase (431 aa).

Residues 13–19 (GDEGKGK) and 41–43 (GHT) contribute to the GTP site. Asp14 functions as the Proton acceptor in the catalytic mechanism. The Mg(2+) site is built by Asp14 and Gly41. IMP-binding positions include 14 to 17 (DEGK), 39 to 42 (NAGH), Thr130, Arg144, Gln225, Thr240, and Arg304. The Proton donor role is filled by His42. 300 to 306 (SVTGRPR) provides a ligand contact to substrate. Residues Arg306, 332–334 (KLD), and 414–416 (STG) contribute to the GTP site.

This sequence belongs to the adenylosuccinate synthetase family. Homodimer. It depends on Mg(2+) as a cofactor.

The protein resides in the cytoplasm. It catalyses the reaction IMP + L-aspartate + GTP = N(6)-(1,2-dicarboxyethyl)-AMP + GDP + phosphate + 2 H(+). It participates in purine metabolism; AMP biosynthesis via de novo pathway; AMP from IMP: step 1/2. In terms of biological role, plays an important role in the de novo pathway of purine nucleotide biosynthesis. Catalyzes the first committed step in the biosynthesis of AMP from IMP. This chain is Adenylosuccinate synthetase, found in Bordetella petrii (strain ATCC BAA-461 / DSM 12804 / CCUG 43448).